The primary structure comprises 474 residues: 3-isopropylmalate dehydratase large subunit (474 aa).

Residues Cys355, Cys415, and Cys418 each coordinate [4Fe-4S] cluster.

Belongs to the aconitase/IPM isomerase family. LeuC type 1 subfamily. As to quaternary structure, heterodimer of LeuC and LeuD. It depends on [4Fe-4S] cluster as a cofactor.

The enzyme catalyses (2R,3S)-3-isopropylmalate = (2S)-2-isopropylmalate. Its pathway is amino-acid biosynthesis; L-leucine biosynthesis; L-leucine from 3-methyl-2-oxobutanoate: step 2/4. Catalyzes the isomerization between 2-isopropylmalate and 3-isopropylmalate, via the formation of 2-isopropylmaleate. The sequence is that of 3-isopropylmalate dehydratase large subunit from Shewanella sp. (strain ANA-3).